A 494-amino-acid polypeptide reads, in one-letter code: Probable cytosol aminopeptidase (494 aa).

Positions 260 and 265 each coordinate Mn(2+). The active site involves Lys272. Positions 283, 342, and 344 each coordinate Mn(2+). Arg346 is a catalytic residue.

It belongs to the peptidase M17 family. The cofactor is Mn(2+).

The protein localises to the cytoplasm. It catalyses the reaction Release of an N-terminal amino acid, Xaa-|-Yaa-, in which Xaa is preferably Leu, but may be other amino acids including Pro although not Arg or Lys, and Yaa may be Pro. Amino acid amides and methyl esters are also readily hydrolyzed, but rates on arylamides are exceedingly low.. The enzyme catalyses Release of an N-terminal amino acid, preferentially leucine, but not glutamic or aspartic acids.. In terms of biological role, presumably involved in the processing and regular turnover of intracellular proteins. Catalyzes the removal of unsubstituted N-terminal amino acids from various peptides. The protein is Probable cytosol aminopeptidase of Bacillus cereus (strain AH187).